A 451-amino-acid polypeptide reads, in one-letter code: Subtilase-type proteinase psp3 (451 aa).

The first 20 residues, 1-20 (MRVSWISGLLLVAHLAPSSA), serve as a signal peptide directing secretion. An Inhibitor I9 domain is found at 80–161 (YIVMFKPSVD…LVEPDRVMHV (82 aa)). The region spanning 169–451 (PWGLARVSHR…PNVLAFNNYE (283 aa)) is the Peptidase S8 domain. Catalysis depends on charge relay system residues Asp-205, His-237, and Ser-394.

It belongs to the peptidase S8 family.

This Schizosaccharomyces pombe (strain 972 / ATCC 24843) (Fission yeast) protein is Subtilase-type proteinase psp3 (psp3).